Reading from the N-terminus, the 470-residue chain is Methylenetetrahydrofolate--tRNA-(uracil-5-)-methyltransferase TrmFO (470 aa).

Position 10-15 (10-15 (GAGLAG)) interacts with FAD.

Belongs to the MnmG family. TrmFO subfamily. FAD is required as a cofactor.

The protein resides in the cytoplasm. It catalyses the reaction uridine(54) in tRNA + (6R)-5,10-methylene-5,6,7,8-tetrahydrofolate + NADH + H(+) = 5-methyluridine(54) in tRNA + (6S)-5,6,7,8-tetrahydrofolate + NAD(+). The catalysed reaction is uridine(54) in tRNA + (6R)-5,10-methylene-5,6,7,8-tetrahydrofolate + NADPH + H(+) = 5-methyluridine(54) in tRNA + (6S)-5,6,7,8-tetrahydrofolate + NADP(+). Catalyzes the folate-dependent formation of 5-methyl-uridine at position 54 (M-5-U54) in all tRNAs. This Prochlorococcus marinus (strain MIT 9312) protein is Methylenetetrahydrofolate--tRNA-(uracil-5-)-methyltransferase TrmFO.